The chain runs to 122 residues: Acidic phospholipase A2 CbIalpha (122 aa).

7 disulfides stabilise this stretch: Cys26-Cys115, Cys28-Cys44, Cys43-Cys95, Cys49-Cys122, Cys50-Cys88, Cys57-Cys81, and Cys75-Cys86. 3 residues coordinate Ca(2+): Tyr27, Gly29, and Gly31. Residue His47 is part of the active site. Ca(2+) is bound at residue Asp48. Asp89 is an active-site residue.

The protein belongs to the phospholipase A2 family. Group II subfamily. D49 sub-subfamily. Heterodimer of an acidic subunit (CbIalpha or CbIbeta) and a basic subunit (CbII). The acidic subunit is non-toxic, and increases the toxicity of the basic subunit. Ca(2+) is required as a cofactor. Expressed by the venom gland.

Its subcellular location is the secreted. It catalyses the reaction a 1,2-diacyl-sn-glycero-3-phosphocholine + H2O = a 1-acyl-sn-glycero-3-phosphocholine + a fatty acid + H(+). Its function is as follows. Heterodimer: presynaptic neurotoxin. In terms of biological role, monomer: Snake venom phospholipase A2 (PLA2) is inactive towards micellar phosphatidylcholine but is weakly active towards non-micellar dithiolecithin. PLA2 catalyzes the calcium-dependent hydrolysis of the 2-acyl groups in 3-sn-phosphoglycerides. The chain is Acidic phospholipase A2 CbIalpha from Pseudocerastes fieldi (Field's horned viper).